The sequence spans 253 residues: 4-hydroxy-tetrahydrodipicolinate reductase (253 aa).

Residues Gly-8–Met-13, Asp-34, Gly-76–Thr-78, and Ala-108–Phe-111 each bind NAD(+). The Proton donor/acceptor role is filled by His-138. His-139 lines the (S)-2,3,4,5-tetrahydrodipicolinate pocket. Catalysis depends on Lys-142, which acts as the Proton donor. Gly-148 to Thr-149 is a binding site for (S)-2,3,4,5-tetrahydrodipicolinate.

The protein belongs to the DapB family.

Its subcellular location is the cytoplasm. The catalysed reaction is (S)-2,3,4,5-tetrahydrodipicolinate + NAD(+) + H2O = (2S,4S)-4-hydroxy-2,3,4,5-tetrahydrodipicolinate + NADH + H(+). The enzyme catalyses (S)-2,3,4,5-tetrahydrodipicolinate + NADP(+) + H2O = (2S,4S)-4-hydroxy-2,3,4,5-tetrahydrodipicolinate + NADPH + H(+). It participates in amino-acid biosynthesis; L-lysine biosynthesis via DAP pathway; (S)-tetrahydrodipicolinate from L-aspartate: step 4/4. Catalyzes the conversion of 4-hydroxy-tetrahydrodipicolinate (HTPA) to tetrahydrodipicolinate. This is 4-hydroxy-tetrahydrodipicolinate reductase from Bifidobacterium animalis subsp. lactis (strain AD011).